The primary structure comprises 164 residues: S-ribosylhomocysteine lyase (164 aa).

3 residues coordinate Fe cation: H61, H65, and C131.

This sequence belongs to the LuxS family. In terms of assembly, homodimer. Requires Fe cation as cofactor.

The enzyme catalyses S-(5-deoxy-D-ribos-5-yl)-L-homocysteine = (S)-4,5-dihydroxypentane-2,3-dione + L-homocysteine. In terms of biological role, involved in the synthesis of autoinducer 2 (AI-2) which is secreted by bacteria and is used to communicate both the cell density and the metabolic potential of the environment. The regulation of gene expression in response to changes in cell density is called quorum sensing. Catalyzes the transformation of S-ribosylhomocysteine (RHC) to homocysteine (HC) and 4,5-dihydroxy-2,3-pentadione (DPD). In Bifidobacterium longum (strain NCC 2705), this protein is S-ribosylhomocysteine lyase.